Consider the following 366-residue polypeptide: Phospho-N-acetylmuramoyl-pentapeptide-transferase (366 aa).

10 consecutive transmembrane segments (helical) span residues 27 to 47 (AALF…IASL), 71 to 91 (TPTM…LLWA), 93 to 113 (LSSI…AIGF), 138 to 158 (FVIA…AGAA), 174 to 194 (LMLN…VGAG), 205 to 225 (GLAI…AYLA), 245 to 265 (LAVI…FNAP), 268 to 288 (AIFM…TVAV), 297 to 317 (VIIG…VFWF), and 343 to 363 (QVVI…LSTL).

Belongs to the glycosyltransferase 4 family. MraY subfamily. It depends on Mg(2+) as a cofactor.

The protein resides in the cell inner membrane. It catalyses the reaction UDP-N-acetyl-alpha-D-muramoyl-L-alanyl-gamma-D-glutamyl-meso-2,6-diaminopimeloyl-D-alanyl-D-alanine + di-trans,octa-cis-undecaprenyl phosphate = di-trans,octa-cis-undecaprenyl diphospho-N-acetyl-alpha-D-muramoyl-L-alanyl-D-glutamyl-meso-2,6-diaminopimeloyl-D-alanyl-D-alanine + UMP. It participates in cell wall biogenesis; peptidoglycan biosynthesis. Its function is as follows. Catalyzes the initial step of the lipid cycle reactions in the biosynthesis of the cell wall peptidoglycan: transfers peptidoglycan precursor phospho-MurNAc-pentapeptide from UDP-MurNAc-pentapeptide onto the lipid carrier undecaprenyl phosphate, yielding undecaprenyl-pyrophosphoryl-MurNAc-pentapeptide, known as lipid I. This chain is Phospho-N-acetylmuramoyl-pentapeptide-transferase, found in Sinorhizobium medicae (strain WSM419) (Ensifer medicae).